Reading from the N-terminus, the 140-residue chain is L-fucose mutarotase (140 aa).

His-22 functions as the Proton donor in the catalytic mechanism. Substrate-binding positions include Asp-30, Arg-107, and 129-131 (YGN).

It belongs to the RbsD / FucU family. FucU mutarotase subfamily. In terms of assembly, homodecamer.

It localises to the cytoplasm. The catalysed reaction is alpha-L-fucose = beta-L-fucose. Its pathway is carbohydrate metabolism; L-fucose metabolism. Involved in the anomeric conversion of L-fucose. The sequence is that of L-fucose mutarotase from Salmonella typhimurium (strain LT2 / SGSC1412 / ATCC 700720).